A 291-amino-acid polypeptide reads, in one-letter code: tRNA-cytidine(32) 2-sulfurtransferase (291 aa).

The short motif at 36–41 (SGGKDS) is the PP-loop motif element. C111, C114, and C202 together coordinate [4Fe-4S] cluster. Residues 258-291 (RDPWLDAEDEEAEDCGEPPAGDGVVSLGGARGGR) form a disordered region. Residues 262–273 (LDAEDEEAEDCG) show a composition bias toward acidic residues.

The protein belongs to the TtcA family. In terms of assembly, homodimer. Mg(2+) serves as cofactor. Requires [4Fe-4S] cluster as cofactor.

The protein resides in the cytoplasm. The catalysed reaction is cytidine(32) in tRNA + S-sulfanyl-L-cysteinyl-[cysteine desulfurase] + AH2 + ATP = 2-thiocytidine(32) in tRNA + L-cysteinyl-[cysteine desulfurase] + A + AMP + diphosphate + H(+). It participates in tRNA modification. In terms of biological role, catalyzes the ATP-dependent 2-thiolation of cytidine in position 32 of tRNA, to form 2-thiocytidine (s(2)C32). The sulfur atoms are provided by the cysteine/cysteine desulfurase (IscS) system. This Anaeromyxobacter dehalogenans (strain 2CP-1 / ATCC BAA-258) protein is tRNA-cytidine(32) 2-sulfurtransferase.